A 236-amino-acid polypeptide reads, in one-letter code: Lectin CPL (236 aa).

Mn(2+)-binding residues include E8 and D10. 4 residues coordinate Ca(2+): D10, Y12, N14, and D19. N14 is a binding site for a carbohydrate. The Mn(2+) site is built by D19 and H24. Residues 99–100, D207, and R227 contribute to the a carbohydrate site; that span reads VY.

Belongs to the leguminous lectin family. As to quaternary structure, homotetramer; dimer of dimers. In terms of processing, concanavalin A-like lectins of the Diocleinae subtribe undergo proteolytic processing referred to as circular permutation. The propeptide is split into an N-terminal and a C-terminal part, the gamma and beta chain, respectively. These are then religated in beta-gamma order to form the mature alpha chain. The beta and gamma chains can often be detected in cell extracts. Residues 1-118 of the mature chain, as displayed here, probably constitute the beta chain in the propeptide, residues 119-236 the gamma chain.

Functionally, D-mannose/D-glucose-binding lectin that also binds derivative alpha-methyl-D-mannppyranoside. Has hemagglutinating activity towards rabbit erythrocytes. This Bionia pedicellata (Camptosema pedicellatum) protein is Lectin CPL.